The primary structure comprises 368 residues: Agmatine deiminase (368 aa).

C357 (amidino-cysteine intermediate) is an active-site residue.

Belongs to the agmatine deiminase family. In terms of assembly, homodimer.

The catalysed reaction is agmatine + H2O = N-carbamoylputrescine + NH4(+). It functions in the pathway amine and polyamine biosynthesis; putrescine biosynthesis via agmatine pathway; N-carbamoylputrescine from agmatine: step 1/1. In terms of biological role, mediates the hydrolysis of agmatine into N-carbamoylputrescine in the arginine decarboxylase (ADC) pathway of putrescine biosynthesis, a basic polyamine. This chain is Agmatine deiminase, found in Pseudomonas putida (strain ATCC 47054 / DSM 6125 / CFBP 8728 / NCIMB 11950 / KT2440).